The primary structure comprises 155 residues: Microsomal glutathione S-transferase 1 (155 aa).

Over 3–9 the chain is Lumenal; that stretch reads NLSQLME. The chain crosses the membrane as a helical span at residues 10-33; it reads NEVFMAFASYTTIVLSKMNFMSTA. Residues 34 to 62 are Cytoplasmic-facing; sequence TAFYRLTKKVFANPEDCAGFGKGENAKKY. Arginine 38 is a glutathione binding site. 3 positions are modified to N6-acetyllysine: lysine 42, lysine 55, and lysine 60. A helical membrane pass occupies residues 63–96; the sequence is LRTDDRVERVRRAHLNDLENIVPFLGIGLLYSLS. Glutathione-binding residues include arginine 73, arginine 74, histidine 76, and glutamate 81. Over 97–99 the chain is Lumenal; sequence GPD. A helical membrane pass occupies residues 100–123; that stretch reads LSTAILHFRLFVRARIYHTIAYLT. Tyrosine 121 contributes to the glutathione binding site. At 124–128 the chain is on the cytoplasmic side; it reads PLPQP. The helical transmembrane segment at 129 to 148 threads the bilayer; sequence NRALAFFIGYGVTLSMAYRL. Topologically, residues 149 to 155 are lumenal; sequence LKSKLYL.

It belongs to the MAPEG family. Homotrimer; The trimer binds only one molecule of glutathione.

The protein localises to the endoplasmic reticulum membrane. It is found in the mitochondrion outer membrane. The catalysed reaction is RX + glutathione = an S-substituted glutathione + a halide anion + H(+). Its function is as follows. Conjugation of reduced glutathione to a wide number of exogenous and endogenous hydrophobic electrophiles. The chain is Microsomal glutathione S-transferase 1 (MGST1) from Bos taurus (Bovine).